The following is a 1491-amino-acid chain: Neurexin-1a (1491 aa).

An N-terminal signal peptide occupies residues 1–27 (MSFSMRNGAHLIWIGLLVCCLVDMGAS). The region spanning 28–208 (MEFTGAEGQW…SDICEADHIC (181 aa)) is the Laminin G-like 1 domain. The Extracellular portion of the chain corresponds to 28–1415 (MEFTGAEGQW…EVIRESSSTT (1388 aa)). The region spanning 198-236 (NSDICEADHICLNGGVCSIVNDEPICDCSETGFQGKDCS) is the EGF-like 1 domain. 3 cysteine pairs are disulfide-bonded: Cys-202–Cys-214, Cys-208–Cys-223, and Cys-225–Cys-235. 2 Laminin G-like domains span residues 263 to 460 (MATF…AFKC) and 467 to 661 (DPVT…KPSC). Ca(2+)-binding residues include Asp-309, Leu-326, and Met-394. 5 disulfides stabilise this stretch: Cys-424–Cys-460, Cys-632–Cys-661, Cys-669–Cys-680, Cys-674–Cys-689, and Cys-691–Cys-701. In terms of domain architecture, EGF-like 2 spans 665–702 (PPKQCLSNPCLNSGTCREGWNRYVCDCSGTGYLGRSCE). Laminin G-like domains follow at residues 707-880 (ILSY…IDYC) and 894-1069 (DPVT…ERGC). Cystine bridges form between Cys-1041–Cys-1069, Cys-1076–Cys-1087, Cys-1081–Cys-1096, and Cys-1098–Cys-1108. Positions 1072 to 1109 (PSTTCQEDSCSNQGVCLQQWEGFSCDCSMTSYGGPLCN) constitute an EGF-like 3 domain. In terms of domain architecture, Laminin G-like 6 spans 1113–1314 (TTYIFGRDGG…DPNVRVEGSA (202 aa)). Positions 1318 to 1408 (GDMPSSSITP…AKGYPSPEVI (91 aa)) are disordered. Residues 1322 to 1353 (SSSITPQSSVSAAGNRSETSPSITDITTTTAS) are compositionally biased toward low complexity. The span at 1354-1364 (NRQGKQTTTPQ) shows a compositional bias: polar residues. Residues 1416-1436 (GMVVGIVAAAALCILILLYAM) traverse the membrane as a helical segment. Residues 1437–1491 (YKYRNRDEGSYHVDESRNYISNSATQPNGAAVKEKPIGVPKNKKDKKNKDKEYYV) are Cytoplasmic-facing. Residues 1457 to 1491 (SNSATQPNGAAVKEKPIGVPKNKKDKKNKDKEYYV) are disordered.

This sequence belongs to the neurexin family.

It localises to the membrane. In terms of biological role, neuronal cell surface protein that may be involved in cell recognition and cell adhesion. The chain is Neurexin-1a (nrxn1a) from Danio rerio (Zebrafish).